A 180-amino-acid polypeptide reads, in one-letter code: NADH-quinone oxidoreductase subunit I (180 aa).

4Fe-4S ferredoxin-type domains lie at 50–80 (LTRD…LQKA) and 90–119 (EFFR…LTPD). [4Fe-4S] cluster-binding residues include Cys60, Cys63, Cys66, Cys70, Cys99, Cys102, Cys105, and Cys109.

The protein belongs to the complex I 23 kDa subunit family. In terms of assembly, NDH-1 is composed of 14 different subunits. Subunits NuoA, H, J, K, L, M, N constitute the membrane sector of the complex. It depends on [4Fe-4S] cluster as a cofactor.

Its subcellular location is the cell inner membrane. It catalyses the reaction a quinone + NADH + 5 H(+)(in) = a quinol + NAD(+) + 4 H(+)(out). In terms of biological role, NDH-1 shuttles electrons from NADH, via FMN and iron-sulfur (Fe-S) centers, to quinones in the respiratory chain. The immediate electron acceptor for the enzyme in this species is believed to be ubiquinone. Couples the redox reaction to proton translocation (for every two electrons transferred, four hydrogen ions are translocated across the cytoplasmic membrane), and thus conserves the redox energy in a proton gradient. The protein is NADH-quinone oxidoreductase subunit I of Acinetobacter baumannii (strain ACICU).